Consider the following 1050-residue polypeptide: FHIP family protein GE18198 (1050 aa).

Phosphoserine is present on residues S498 and S805. Disordered stretches follow at residues 800–827 (KGNEGSPMHHSQQQQMATNSGQQQGQLR), 865–888 (TSMFSRKSASNTSTTPPNGSSASS), 911–954 (TDGR…SGSN), and 968–995 (SNTTTHSASTLHGLDGGPSTGGFNSEPA). Residues 808–826 (HHSQQQQMATNSGQQQGQL) are compositionally biased toward polar residues. Over residues 872–888 (SASNTSTTPPNGSSASS) the composition is skewed to low complexity. Residues 918 to 935 (HAQTSAGTCETSLSTQPQ) are compositionally biased toward polar residues. Low complexity predominate over residues 941–954 (TGAIATSATASGSN). Polar residues predominate over residues 968–977 (SNTTTHSAST).

The protein belongs to the FHIP family.

The chain is FHIP family protein GE18198 from Drosophila yakuba (Fruit fly).